The sequence spans 284 residues: 2,3,4,5-tetrahydropyridine-2,6-dicarboxylate N-succinyltransferase (284 aa).

Residues Arg111 and Asp148 each contribute to the substrate site.

This sequence belongs to the transferase hexapeptide repeat family. Homotrimer.

The protein localises to the cytoplasm. It carries out the reaction (S)-2,3,4,5-tetrahydrodipicolinate + succinyl-CoA + H2O = (S)-2-succinylamino-6-oxoheptanedioate + CoA. The protein operates within amino-acid biosynthesis; L-lysine biosynthesis via DAP pathway; LL-2,6-diaminopimelate from (S)-tetrahydrodipicolinate (succinylase route): step 1/3. This Mesorhizobium japonicum (strain LMG 29417 / CECT 9101 / MAFF 303099) (Mesorhizobium loti (strain MAFF 303099)) protein is 2,3,4,5-tetrahydropyridine-2,6-dicarboxylate N-succinyltransferase.